The chain runs to 201 residues: Basic helix-loop-helix transcription factor scleraxis (201 aa).

2 disordered regions span residues 1–92 (MSFA…NSVN) and 148–177 (AFFH…QPKQ). The span at 59–69 (RRAGGGGPGGR) shows a compositional bias: gly residues. Over residues 70–88 (PGREPRQRHTANARERDRT) the composition is skewed to basic and acidic residues. Positions 75 to 127 (RQRHTANARERDRTNSVNTAFTALRTLIPTEPADRKLSKIETLRLASSYISHL) constitute a bHLH domain. Residues 157 to 167 (SPPPPPPPPPA) show a composition bias toward pro residues.

In terms of assembly, efficient DNA binding requires dimerization with another bHLH protein. Dimerizes and binds the E-box consensus sequence with E12.

Its subcellular location is the nucleus. Its function is as follows. Plays an early essential role in mesoderm formation, as well as a later role in formation of somite-derived chondrogenic lineages. This chain is Basic helix-loop-helix transcription factor scleraxis (SCX), found in Homo sapiens (Human).